We begin with the raw amino-acid sequence, 247 residues long: Methionyl-tRNA formyltransferase (247 aa).

The protein belongs to the Fmt family.

The enzyme catalyses L-methionyl-tRNA(fMet) + (6R)-10-formyltetrahydrofolate = N-formyl-L-methionyl-tRNA(fMet) + (6S)-5,6,7,8-tetrahydrofolate + H(+). In terms of biological role, attaches a formyl group to the free amino group of methionyl-tRNA(fMet). The formyl group appears to play a dual role in the initiator identity of N-formylmethionyl-tRNA by promoting its recognition by IF2 and preventing the misappropriation of this tRNA by the elongation apparatus. In Vibrio alginolyticus, this protein is Methionyl-tRNA formyltransferase (fmt).